The following is a 365-amino-acid chain: tRNA/tmRNA (uracil-C(5))-methyltransferase (365 aa).

Positions 188, 216, 221, 237, and 297 each coordinate S-adenosyl-L-methionine. Cys322 acts as the Nucleophile in catalysis. Catalysis depends on Glu356, which acts as the Proton acceptor.

It belongs to the class I-like SAM-binding methyltransferase superfamily. RNA M5U methyltransferase family. TrmA subfamily.

It catalyses the reaction uridine(54) in tRNA + S-adenosyl-L-methionine = 5-methyluridine(54) in tRNA + S-adenosyl-L-homocysteine + H(+). It carries out the reaction uridine(341) in tmRNA + S-adenosyl-L-methionine = 5-methyluridine(341) in tmRNA + S-adenosyl-L-homocysteine + H(+). Functionally, dual-specificity methyltransferase that catalyzes the formation of 5-methyluridine at position 54 (m5U54) in all tRNAs, and that of position 341 (m5U341) in tmRNA (transfer-mRNA). The protein is tRNA/tmRNA (uracil-C(5))-methyltransferase of Aggregatibacter aphrophilus (strain NJ8700) (Haemophilus aphrophilus).